A 321-amino-acid chain; its full sequence is Phospho-N-acetylmuramoyl-pentapeptide-transferase (321 aa).

Transmembrane regions (helical) follow at residues 1-21, 50-70, 76-96, 112-132, 140-160, 173-193, 198-218, 225-245, 250-270, and 300-320; these read MVYL…PVLI, MGGL…IIFI, IILL…DDYI, FLAQ…FNLT, IPFI…IVFW, GLDG…AIMA, ATSI…FLPF, VFMG…ISIM, LSLL…MIQV, and VVTV…WIGV.

It belongs to the glycosyltransferase 4 family. MraY subfamily. The cofactor is Mg(2+).

It is found in the cell membrane. The catalysed reaction is UDP-N-acetyl-alpha-D-muramoyl-L-alanyl-gamma-D-glutamyl-L-lysyl-D-alanyl-D-alanine + di-trans,octa-cis-undecaprenyl phosphate = Mur2Ac(oyl-L-Ala-gamma-D-Glu-L-Lys-D-Ala-D-Ala)-di-trans,octa-cis-undecaprenyl diphosphate + UMP. The protein operates within cell wall biogenesis; peptidoglycan biosynthesis. In terms of biological role, catalyzes the initial step of the lipid cycle reactions in the biosynthesis of the cell wall peptidoglycan: transfers peptidoglycan precursor phospho-MurNAc-pentapeptide from UDP-MurNAc-pentapeptide onto the lipid carrier undecaprenyl phosphate, yielding undecaprenyl-pyrophosphoryl-MurNAc-pentapeptide, known as lipid I. The polypeptide is Phospho-N-acetylmuramoyl-pentapeptide-transferase (Staphylococcus saprophyticus subsp. saprophyticus (strain ATCC 15305 / DSM 20229 / NCIMB 8711 / NCTC 7292 / S-41)).